Consider the following 463-residue polypeptide: Cysteine--tRNA ligase (463 aa).

Cysteine 33 provides a ligand contact to Zn(2+). The 'HIGH' region motif lies at 35–45 (PTVYDFAHIGN). Positions 221, 246, and 250 each coordinate Zn(2+). A 'KMSKS' region motif is present at residues 279-283 (KMSKS). Position 282 (lysine 282) interacts with ATP.

Belongs to the class-I aminoacyl-tRNA synthetase family. In terms of assembly, monomer. The cofactor is Zn(2+).

The protein localises to the cytoplasm. The catalysed reaction is tRNA(Cys) + L-cysteine + ATP = L-cysteinyl-tRNA(Cys) + AMP + diphosphate. This is Cysteine--tRNA ligase from Rhizobium rhizogenes (strain K84 / ATCC BAA-868) (Agrobacterium radiobacter).